Here is a 195-residue protein sequence, read N- to C-terminus: Archaetidylinositol phosphate synthase (195 aa).

A run of 2 helical transmembrane segments spans residues 27 to 47 and 54 to 74; these read IALPADYITLTGFLVACAASA and LITGAALLAASGFIDVLDGAV. Positions 68, 71, 89, and 93 each coordinate Mg(2+). Aspartate 93 (proton acceptor) is an active-site residue. Transmembrane regions (helical) follow at residues 99–119 and 158–178; these read IIIIGITAGGFTGLLTGLLAL and LAGYLIHPWFMDAAIIVLAAL.

Belongs to the CDP-alcohol phosphatidyltransferase class-I family. Mn(2+) is required as a cofactor. Requires Mg(2+) as cofactor.

It localises to the cell membrane. The enzyme catalyses CDP-2,3-bis-O-(phytanyl)-sn-glycerol + 1D-myo-inositol 3-phosphate = saturated 1-archaetidyl-1D-myo-inositol 3-phosphate + CMP + H(+). Its pathway is lipid metabolism; phospholipid metabolism. Its function is as follows. Catalyzes the formation of archaetidylinositol phosphate (AIP) from CDP-archaeol (CDP-ArOH or CDP-2,3-bis-(O-phytanyl)-sn-glycerol) and 1L-myo-inositol 1-phosphate (IP or 1D-myo-inositol 3-phosphate). AIP is a precursor of archaetidyl-myo-inositol (AI), an ether-type inositol phospholipid ubiquitously distributed in archaea membranes and essential for glycolipid biosynthesis in archaea. The sequence is that of Archaetidylinositol phosphate synthase from Methanothermobacter thermautotrophicus (strain ATCC 29096 / DSM 1053 / JCM 10044 / NBRC 100330 / Delta H) (Methanobacterium thermoautotrophicum).